We begin with the raw amino-acid sequence, 461 residues long: UDP-N-acetylmuramoylalanine--D-glutamate ligase (461 aa).

115-121 (GSNGKTT) provides a ligand contact to ATP.

It belongs to the MurCDEF family.

The protein resides in the cytoplasm. It carries out the reaction UDP-N-acetyl-alpha-D-muramoyl-L-alanine + D-glutamate + ATP = UDP-N-acetyl-alpha-D-muramoyl-L-alanyl-D-glutamate + ADP + phosphate + H(+). It functions in the pathway cell wall biogenesis; peptidoglycan biosynthesis. Its function is as follows. Cell wall formation. Catalyzes the addition of glutamate to the nucleotide precursor UDP-N-acetylmuramoyl-L-alanine (UMA). In Acidobacterium capsulatum (strain ATCC 51196 / DSM 11244 / BCRC 80197 / JCM 7670 / NBRC 15755 / NCIMB 13165 / 161), this protein is UDP-N-acetylmuramoylalanine--D-glutamate ligase.